The chain runs to 398 residues: Lysophosphatidylserine lipase ABHD12 (398 aa).

Basic and acidic residues predominate over residues 1-15 (MRKRTEPVTLEHERC). A disordered region spans residues 1–24 (MRKRTEPVTLEHERCAASGSSSSG). Residues 1–74 (MRKRTEPVTL…RKSLWFRLRK (74 aa)) lie on the Cytoplasmic side of the membrane. A helical membrane pass occupies residues 75 to 95 (ILLCVLGFYIAIPFLVKLCPG). Residues 96–398 (IQAKLIFLNF…LGKSEPERQH (303 aa)) are Extracellular-facing. Asn123 is a glycosylation site (N-linked (GlcNAc...) asparagine). Catalysis depends on Ser246, which acts as the Nucleophile. Active-site charge relay system residues include Asp333 and His372.

The protein belongs to the serine esterase family. Glycosylated.

The protein localises to the endoplasmic reticulum membrane. It localises to the mitochondrion. It catalyses the reaction 1-(9Z-octadecenoyl)-sn-glycero-3-phospho-L-serine + H2O = sn-glycero-3-phospho-L-serine + (9Z)-octadecenoate + H(+). The catalysed reaction is 1-(9Z-octadecenoyl)-sn-glycero-3-phospho-(1'-sn-glycerol) + H2O = sn-glycero-3-phospho-(1'-sn-glycerol) + (9Z)-octadecenoate + H(+). The enzyme catalyses 1-(9Z-octadecenoyl)-sn-glycero-3-phospho-(1D-myo-inositol) + H2O = sn-glycero-3-phospho-1D-myo-inositol + (9Z)-octadecenoate + H(+). It carries out the reaction 1-(9Z-octadecenoyl)-sn-glycero-3-phosphoethanolamine + H2O = sn-glycero-3-phosphoethanolamine + (9Z)-octadecenoate + H(+). It catalyses the reaction 1-(9Z-octadecenoyl)-sn-glycero-3-phosphocholine + H2O = 1-(9Z-octadecenoyl)-sn-glycerol + phosphocholine + H(+). The catalysed reaction is 2-(9Z-octadecenoyl)-glycerol + H2O = glycerol + (9Z)-octadecenoate + H(+). The enzyme catalyses 1-hexadecanoyl-sn-glycero-3-phospho-L-serine + H2O = sn-glycero-3-phospho-L-serine + hexadecanoate + H(+). It carries out the reaction 2-(5Z,8Z,11Z,14Z-eicosatetraenoyl)-glycerol + H2O = glycerol + (5Z,8Z,11Z,14Z)-eicosatetraenoate + H(+). It catalyses the reaction Hydrolyzes glycerol monoesters of long-chain fatty acids.. The catalysed reaction is 1-decanoylglycerol + H2O = decanoate + glycerol + H(+). The enzyme catalyses 1-dodecanoylglycerol + H2O = dodecanoate + glycerol + H(+). It carries out the reaction 1-tetradecanoylglycerol + H2O = tetradecanoate + glycerol + H(+). It catalyses the reaction 2-hexadecanoylglycerol + H2O = glycerol + hexadecanoate + H(+). The catalysed reaction is 1-(9Z-octadecenoyl)-glycerol + H2O = glycerol + (9Z)-octadecenoate + H(+). The enzyme catalyses 2-(9Z,12Z-octadecadienoyl)-glycerol + H2O = (9Z,12Z)-octadecadienoate + glycerol + H(+). It carries out the reaction 1-(5Z,8Z,11Z,14Z-eicosatetraenoyl)-glycerol + H2O = glycerol + (5Z,8Z,11Z,14Z)-eicosatetraenoate + H(+). It catalyses the reaction 1-(9Z,12Z-octadecadienoyl)-glycerol + H2O = (9Z,12Z)-octadecadienoate + glycerol + H(+). The catalysed reaction is 1-hexadecanoylglycerol + H2O = glycerol + hexadecanoate + H(+). The enzyme catalyses 1-octadecanoylglycerol + H2O = octadecanoate + glycerol + H(+). It carries out the reaction 1-octadecanoyl-2-(9,10-epoxyoctadecanoyl)-sn-glycero-3-phospho-L-serine + H2O = 9,10-epoxyoctadecanoate + 1-octadecanoyl-sn-glycero-3-phosphoserine + H(+). It catalyses the reaction 1-octadecanoyl-2-(10-hydroxyoctadecanoyl)-sn-glycero-3-phospho-L-serine + H2O = 1-octadecanoyl-sn-glycero-3-phosphoserine + 10-hydroxyoctadecanoate + H(+). The catalysed reaction is 1-hexadecanoyl-2-(10-hydroxyoctadecanoyl)-sn-glycero-3-phospho-L-serine + H2O = 10-hydroxyoctadecanoate + 1-hexadecanoyl-sn-glycero-3-phospho-L-serine + H(+). With respect to regulation, selectively inhibited by DO264 (N-3-pyridyl-N'-(1-[3-chloro-4-{2-chloro-4-(trifluoromethoxy)phenoxy}pyridine-2-yl]piperidin-4-yl)thiourea). In terms of biological role, lysophosphatidylserine (LPS) lipase that mediates the hydrolysis of lysophosphatidylserine, a class of signaling lipids that regulates immunological and neurological processes. Represents a major lysophosphatidylserine lipase in the brain, thereby playing a key role in the central nervous system. Also able to hydrolyze oxidized phosphatidylserine; oxidized phosphatidylserine is produced in response to severe inflammatory stress and constitutes a proapoptotic 'eat me' signal. Also has monoacylglycerol (MAG) lipase activity: hydrolyzes 2-arachidonoylglycerol (2-AG), thereby acting as a regulator of endocannabinoid signaling pathways. Has a strong preference for very-long-chain lipid substrates; substrate specificity is likely due to improved catalysis and not improved substrate binding. This Mus musculus (Mouse) protein is Lysophosphatidylserine lipase ABHD12.